The chain runs to 442 residues: Xaa-Pro dipeptidase (442 aa).

Mn(2+)-binding residues include D245, D256, H338, E383, and E422.

It belongs to the peptidase M24B family. Bacterial-type prolidase subfamily. Mn(2+) is required as a cofactor.

The catalysed reaction is Xaa-L-Pro dipeptide + H2O = an L-alpha-amino acid + L-proline. In terms of biological role, splits dipeptides with a prolyl residue in the C-terminal position. The sequence is that of Xaa-Pro dipeptidase from Sodalis glossinidius (strain morsitans).